Here is a 271-residue protein sequence, read N- to C-terminus: Phosphate import ATP-binding protein PstB 3 (271 aa).

Positions 20–266 constitute an ABC transporter domain; sequence LRVEGLGFYY…PQETQTRDYV (247 aa). ATP is bound at residue 52 to 59; that stretch reads GPSGCGKS.

Belongs to the ABC transporter superfamily. Phosphate importer (TC 3.A.1.7) family. In terms of assembly, the complex is composed of two ATP-binding proteins (PstB), two transmembrane proteins (PstC and PstA) and a solute-binding protein (PstS).

It localises to the cell inner membrane. It catalyses the reaction phosphate(out) + ATP + H2O = ADP + 2 phosphate(in) + H(+). Functionally, part of the ABC transporter complex PstSACB involved in phosphate import. Responsible for energy coupling to the transport system. The sequence is that of Phosphate import ATP-binding protein PstB 3 from Synechocystis sp. (strain ATCC 27184 / PCC 6803 / Kazusa).